Here is a 572-residue protein sequence, read N- to C-terminus: Phosphoenolpyruvate-protein phosphotransferase (572 aa).

The active-site Tele-phosphohistidine intermediate is the His191. 2 residues coordinate phosphoenolpyruvate: Arg298 and Arg334. Mg(2+)-binding residues include Glu433 and Asp457. Residues 456 to 457 (ND) and Arg467 each bind phosphoenolpyruvate. The active-site Proton donor is Cys504.

This sequence belongs to the PEP-utilizing enzyme family. Homodimer. Mg(2+) serves as cofactor.

It is found in the cytoplasm. It carries out the reaction L-histidyl-[protein] + phosphoenolpyruvate = N(pros)-phospho-L-histidyl-[protein] + pyruvate. Functionally, general (non sugar-specific) component of the phosphoenolpyruvate-dependent sugar phosphotransferase system (sugar PTS). This major carbohydrate active-transport system catalyzes the phosphorylation of incoming sugar substrates concomitantly with their translocation across the cell membrane. Enzyme I transfers the phosphoryl group from phosphoenolpyruvate (PEP) to the phosphoryl carrier protein (HPr). This chain is Phosphoenolpyruvate-protein phosphotransferase (ptsI), found in Staphylococcus aureus (strain COL).